We begin with the raw amino-acid sequence, 321 residues long: uncharacterized protein (321 aa).

In terms of domain architecture, HTH lysR-type spans 1–58 (MTPAQLRAYSAVVRLGSVRAAAAELGLSDAGVSMHVAALRKELDDPLFTRTGAGLAFT). The segment at residues 18–37 (VRAAAAELGLSDAGVSMHVA) is a DNA-binding region (H-T-H motif).

The protein belongs to the LysR transcriptional regulatory family.

This is an uncharacterized protein from Mycobacterium tuberculosis (strain CDC 1551 / Oshkosh).